A 76-amino-acid chain; its full sequence is MRFYIGLMAALMLTSILRTDSASVDQTGAEGGLALIERVIRQRDAADVKPVARTNEGPGRDPAPCCQHPIETCCRR.

The first 22 residues, 1–22 (MRFYIGLMAALMLTSILRTDSA), serve as a signal peptide directing secretion. The propeptide occupies 23 to 42 (SVDQTGAEGGLALIERVIRQ). P50 is modified (4-hydroxyproline). P58 carries the post-translational modification 4-hydroxyproline; in form cal5a, and form cal5b. P62 carries the 4-hydroxyproline; in form cal5a, form cal5b, and form cal5c modification. The residue at position 64 (P64) is a 4-hydroxyproline; in form cal5a, form cal5b, form cal5c, and form cal5d.

Post-translationally, contains 2 disulfide bonds that can be either 'C1-C3, C2-C4' or 'C1-C4, C2-C3', since these disulfide connectivities have been observed for conotoxins with cysteine framework V (for examples, see AC P0DQQ7 and AC P81755). Five different peptides have been described after total venom examination by HPLC-MS. Cal5a is the longest. Cal5b-Cal5e are identical in length but are differentially hydroxylated. It is possible that hydroxylation and proteolysis at position 53 are incomplete in some of these peptides. Expressed by the venom duct.

The protein resides in the secreted. Functionally, probable neurotoxin with unknown target. Possibly targets ion channels. The protein is Conotoxin Cal5a L1 of Californiconus californicus (California cone).